A 445-amino-acid polypeptide reads, in one-letter code: Phosphoglucosamine mutase (445 aa).

S103 (phosphoserine intermediate) is an active-site residue. 4 residues coordinate Mg(2+): S103, D240, D242, and D244. At S103 the chain carries Phosphoserine.

It belongs to the phosphohexose mutase family. It depends on Mg(2+) as a cofactor. Activated by phosphorylation.

The enzyme catalyses alpha-D-glucosamine 1-phosphate = D-glucosamine 6-phosphate. Functionally, catalyzes the conversion of glucosamine-6-phosphate to glucosamine-1-phosphate. This Cellvibrio japonicus (strain Ueda107) (Pseudomonas fluorescens subsp. cellulosa) protein is Phosphoglucosamine mutase.